Consider the following 361-residue polypeptide: Septin-2 (361 aa).

Y17 carries the phosphotyrosine modification. Residues 34–306 (KGFEFTLMVV…ENFRSERLKR (273 aa)) enclose the Septin-type G domain. The segment at 44–51 (GESGLGKS) is G1 motif. GTP contacts are provided by residues 44-51 (GESGLGKS), T78, G104, and 183-191 (KADTLTLKE). The interval 101 to 104 (DTPG) is G3 motif. Residues 182 to 185 (AKAD) form a G4 motif region. An N6-acetyllysine modification is found at K190. Position 211 is a phosphotyrosine (Y211). A Phosphoserine modification is found at S218. G241 and R256 together coordinate GTP. The tract at residues 260 to 270 (WGVVEVENPEH) is important for dimerization.

Belongs to the TRAFAC class TrmE-Era-EngA-EngB-Septin-like GTPase superfamily. Septin GTPase family. As to quaternary structure, septins polymerize into heterooligomeric protein complexes that form filaments, and associate with cellular membranes, actin filaments and microtubules. GTPase activity is required for filament formation. Septin filaments are assembled from asymmetrical heterotrimers, composed of SEPTIN2, SEPTIN6 and SEPTIN7 that associate head-to-head to form a hexameric unit. Interaction between SEPTIN2 and SEPTIN7 seems indirect. Also interacts with SEPTIN9 and SEPTIN5. Interaction with SEPTIN4 not detected. Component of a septin core octameric complex consisting of SEPTIN12, SEPTIN7, SEPTIN6 and SEPTIN2 or SEPTIN4 in the order 12-7-6-2-2-6-7-12 or 12-7-6-4-4-6-7-12 and located in the sperm annulus. Interacts with MAP4. Interacts with DZIP1L.

It localises to the cytoplasm. The protein localises to the cytoskeleton. It is found in the spindle. Its subcellular location is the cleavage furrow. The protein resides in the midbody. It localises to the cell cortex. The protein localises to the cell projection. It is found in the cilium membrane. Its subcellular location is the cilium. The protein resides in the flagellum. Functionally, filament-forming cytoskeletal GTPase. Forms a filamentous structure with SEPTIN12, SEPTIN6, SEPTIN2 and probably SEPTIN4 at the sperm annulus which is required for the structural integrity and motility of the sperm tail during postmeiotic differentiation. Required for normal organization of the actin cytoskeleton. Plays a role in the biogenesis of polarized columnar-shaped epithelium by maintaining polyglutamylated microtubules, thus facilitating efficient vesicle transport, and by impeding MAP4 binding to tubulin. Required for the progression through mitosis. Forms a scaffold at the midplane of the mitotic splindle required to maintain CENPE localization at kinetochores and consequently chromosome congression. During anaphase, may be required for chromosome segregation and spindle elongation. Plays a role in ciliogenesis and collective cell movements. In cilia, required for the integrity of the diffusion barrier at the base of the primary cilium that prevents diffusion of transmembrane proteins between the cilia and plasma membranes: probably acts by regulating the assembly of the tectonic-like complex (also named B9 complex) by localizing TMEM231 protein. This is Septin-2 from Rattus norvegicus (Rat).